The primary structure comprises 76 residues: MEDMAKKDGVIEIEGVVTEALPNAMFRVELTNKHIVLAHISGKMRQHYIRILPEDRVVVELSPYDLTRGRIVYRYK.

The S1-like domain occupies Met-1 to Lys-76.

The protein belongs to the IF-1 family. Component of the 30S ribosomal translation pre-initiation complex which assembles on the 30S ribosome in the order IF-2 and IF-3, IF-1 and N-formylmethionyl-tRNA(fMet); mRNA recruitment can occur at any time during PIC assembly.

The protein resides in the cytoplasm. Functionally, one of the essential components for the initiation of protein synthesis. Stabilizes the binding of IF-2 and IF-3 on the 30S subunit to which N-formylmethionyl-tRNA(fMet) subsequently binds. Helps modulate mRNA selection, yielding the 30S pre-initiation complex (PIC). Upon addition of the 50S ribosomal subunit IF-1, IF-2 and IF-3 are released leaving the mature 70S translation initiation complex. The sequence is that of Translation initiation factor IF-1 from Renibacterium salmoninarum (strain ATCC 33209 / DSM 20767 / JCM 11484 / NBRC 15589 / NCIMB 2235).